The chain runs to 317 residues: Protoheme IX farnesyltransferase (317 aa).

The next 9 membrane-spanning stretches (helical) occupy residues 43-63, 65-85, 119-139, 140-160, 168-188, 195-215, 238-258, 261-281, and 292-312; these read PISV…AGAT, PVSG…CAGA, ALYW…NLNP, IAWI…SLWL, IVIG…AVTG, VLIA…LAIF, LNWL…IYFV, WGLV…ALSV, and AWVL…SMMV.

This sequence belongs to the UbiA prenyltransferase family. Protoheme IX farnesyltransferase subfamily. Interacts with CtaA.

It localises to the cell membrane. The enzyme catalyses heme b + (2E,6E)-farnesyl diphosphate + H2O = Fe(II)-heme o + diphosphate. It participates in porphyrin-containing compound metabolism; heme O biosynthesis; heme O from protoheme: step 1/1. In terms of biological role, converts heme B (protoheme IX) to heme O by substitution of the vinyl group on carbon 2 of heme B porphyrin ring with a hydroxyethyl farnesyl side group. This is Protoheme IX farnesyltransferase from Desulforudis audaxviator (strain MP104C).